The primary structure comprises 510 residues: Ectonucleoside triphosphate diphosphohydrolase 1 (510 aa).

The Cytoplasmic portion of the chain corresponds to 1 to 16 (MEDIKDSKVKRFCSKN). A helical transmembrane segment spans residues 17 to 37 (ILIILGFTSILAVIALIAVGL). The Extracellular segment spans residues 38–478 (TQNKPLPENV…SPPLPHSTYI (441 aa)). An N-linked (GlcNAc...) asparagine glycan is attached at N73. C84 and C108 form a disulfide bridge. E174 serves as the catalytic Proton acceptor. 3 N-linked (GlcNAc...) asparagine glycosylation sites follow: N226, N291, and N333. Disulfide bonds link C254-C300 and C281-C324. 2 disulfide bridges follow: C337–C342 and C391–C414. 2 N-linked (GlcNAc...) asparagine glycosylation sites follow: N428 and N457. The chain crosses the membrane as a helical span at residues 479–499 (GLMVLFSLLLVAVAITGLFIY). Residues 500–510 (SKPSYFWKEAV) lie on the Cytoplasmic side of the membrane.

This sequence belongs to the GDA1/CD39 NTPase family. Homodimer; disulfide-linked. It depends on Ca(2+) as a cofactor. Mg(2+) is required as a cofactor. In terms of processing, N-glycosylated. Post-translationally, the N-terminus is blocked. Palmitoylated on Cys-13; which is required for caveola targeting.

It localises to the membrane. The protein resides in the caveola. It carries out the reaction a ribonucleoside 5'-triphosphate + 2 H2O = a ribonucleoside 5'-phosphate + 2 phosphate + 2 H(+). It catalyses the reaction a ribonucleoside 5'-triphosphate + H2O = a ribonucleoside 5'-diphosphate + phosphate + H(+). The enzyme catalyses a ribonucleoside 5'-diphosphate + H2O = a ribonucleoside 5'-phosphate + phosphate + H(+). The catalysed reaction is ATP + 2 H2O = AMP + 2 phosphate + 2 H(+). It carries out the reaction ATP + H2O = ADP + phosphate + H(+). It catalyses the reaction ADP + H2O = AMP + phosphate + H(+). The enzyme catalyses CTP + 2 H2O = CMP + 2 phosphate + 2 H(+). The catalysed reaction is CTP + H2O = CDP + phosphate + H(+). It carries out the reaction CDP + H2O = CMP + phosphate + H(+). It catalyses the reaction GTP + 2 H2O = GMP + 2 phosphate + 2 H(+). The enzyme catalyses GTP + H2O = GDP + phosphate + H(+). The catalysed reaction is GDP + H2O = GMP + phosphate + H(+). It carries out the reaction ITP + 2 H2O = IMP + 2 phosphate + 2 H(+). It catalyses the reaction ITP + H2O = IDP + phosphate + H(+). The enzyme catalyses IDP + H2O = IMP + phosphate + H(+). The catalysed reaction is UTP + 2 H2O = UMP + 2 phosphate + 2 H(+). It carries out the reaction UTP + H2O = UDP + phosphate + H(+). It catalyses the reaction UDP + H2O = UMP + phosphate + H(+). Catalyzes the hydrolysis of both di- and triphosphate nucleotides (NDPs and NTPs) and hydrolyze NTPs to nucleotide monophosphates (NMPs) in two distinct successive phosphate-releasing steps, with NDPs as intermediates and participates in the regulation of extracellular levels of nucleotides. By hydrolyzing proinflammatory ATP and platelet-activating ADP to AMP, it blocks platelet aggregation and supports blood flow. The sequence is that of Ectonucleoside triphosphate diphosphohydrolase 1 from Mus musculus (Mouse).